The sequence spans 136 residues: Small ribosomal subunit protein uS9 (136 aa).

The tract at residues 96 to 136 (LSPDNRKPLKTEGHLSRDPRAKERRKYGLKKARKAPQFSKR) is disordered. The span at 98–116 (PDNRKPLKTEGHLSRDPRA) shows a compositional bias: basic and acidic residues. The span at 117-136 (KERRKYGLKKARKAPQFSKR) shows a compositional bias: basic residues.

It belongs to the universal ribosomal protein uS9 family.

The chain is Small ribosomal subunit protein uS9 from Prochlorococcus marinus (strain MIT 9515).